A 26-amino-acid polypeptide reads, in one-letter code: Metallothionein (26 aa).

Residues 1 to 14 (MGDCGCSGASSCNC) show a composition bias toward low complexity. Residues 1 to 26 (MGDCGCSGASSCNCGSGCSCSNCGSK) form a disordered region. Positions 4, 6, 12, 14, 18, 20, and 23 each coordinate Cu(+). Over residues 15–26 (GSGCSCSNCGSK) the composition is skewed to cys residues.

It belongs to the metallothionein superfamily. Type 8 family.

The chain is Metallothionein (cmt) from Neurospora crassa (strain ATCC 24698 / 74-OR23-1A / CBS 708.71 / DSM 1257 / FGSC 987).